Consider the following 617-residue polypeptide: Ceramide transfer protein (617 aa).

Residues 1–11 show a composition bias toward polar residues; sequence MSDNQSWNSSG. The disordered stretch occupies residues 1–23; it reads MSDNQSWNSSGSEEDLETESGPP. One can recognise a PH domain in the interval 23–117; the sequence is PVERCGVLSK…WIDSIEQHKS (95 aa). Residues 268 to 302 are a coiled coil; the sequence is REDSWQKRLDKEIEKRRRVEEAYKNAMTELKKKSH. The FFAT motif lies at 320–326; the sequence is EFFDAVE. Over residues 332–344 the composition is skewed to basic and acidic residues; that stretch reads QDKIEQSQSEKGR. Positions 332–355 are disordered; sequence QDKIEQSQSEKGRSHWPSSLPSTE. Positions 383 to 611 constitute an START domain; sequence DEHRFRIQVE…FTSYVQEKTA (229 aa). An N-acylsphing-4-enine is bound by residues Glu466, Gln487, Asn524, and Tyr572.

The protein resides in the cytoplasm. The protein localises to the golgi apparatus. It is found in the endoplasmic reticulum. The catalysed reaction is N-hexadecanoylsphing-4-enine(in) = N-hexadecanoylsphing-4-enine(out). Functionally, may mediate the intracellular trafficking of ceramide in a non-vesicular manner. This is Ceramide transfer protein (cert1) from Xenopus tropicalis (Western clawed frog).